Consider the following 311-residue polypeptide: Olfactory receptor 1073 (311 aa).

Residues 1 to 25 (MKQQNDTQILQFLLLGLSENTELQP) lie on the Extracellular side of the membrane. Asn-5 carries an N-linked (GlcNAc...) asparagine glycan. Residues 26–46 (LIYWLFFSMYLVTVWGNLIII) form a helical membrane-spanning segment. The Cytoplasmic portion of the chain corresponds to 47–57 (LATVLDFRLHT). A helical membrane pass occupies residues 58–78 (AMYFFLCNLSFVDICLISTTI). Over 79-97 (PKMLANVHLNHKAITYEGC) the chain is Extracellular. A disulfide bond links Cys-97 and Cys-179. A helical membrane pass occupies residues 98–118 (IMQIYFFTLFVGLDNFLLAVM). At 119-133 (AYDRFVAICHPLRYT) the chain is on the cytoplasmic side. Residues 134–154 (SIMTPHLCMSLVLVSWIASVL) form a helical membrane-spanning segment. Asn-155 carries an N-linked (GlcNAc...) asparagine glycan. At 155 to 196 (NSSLQSFLVLQLSFCTEVEIPHFFCELSMLVHLACSDTFLSD) the chain is on the extracellular side. The chain crosses the membrane as a helical span at residues 197–217 (MAMNVLAALLGGGCLVGILYS). Over 218-244 (YSKIVSSIQAISSAEGKYKAFSTCVSH) the chain is Cytoplasmic. The helical transmembrane segment at 245–265 (LSVVSLFYCTLLGVYLSSAVT) threads the bilayer. Residues 266-271 (QNSHST) are Extracellular-facing. The chain crosses the membrane as a helical span at residues 272–292 (AATSLMYTVVTPMLNPFIYSL). The Cytoplasmic portion of the chain corresponds to 293-311 (RNDNIKRALKNFVKKKLEK).

This sequence belongs to the G-protein coupled receptor 1 family. In terms of tissue distribution, tongue specific.

Its subcellular location is the cell membrane. Possible taste receptor. In Rattus norvegicus (Rat), this protein is Olfactory receptor 1073 (Olr1073).